The following is a 614-amino-acid chain: DBH-like monooxygenase protein 1 (614 aa).

Residues 1 to 22 (MRPLRPWALLLGALLGAAAAAA) form the signal peptide. The Lumenal segment spans residues 23–592 (RRYPHVAVLD…SSSCLPCSLS (570 aa)). Residues 35–148 (AAYRLLWGRR…STVRVIWAYH (114 aa)) form the DOMON domain. N-linked (GlcNAc...) asparagine glycosylation occurs at asparagine 114. Tyrosine 203 is an active-site residue. Intrachain disulfides connect cysteine 205–cysteine 257 and cysteine 242–cysteine 269. Cu cation-binding residues include histidine 235 and histidine 236. N-linked (GlcNAc...) asparagine glycosylation is present at asparagine 247. Positions 307, 389, 391, and 464 each coordinate Cu cation. 3 disulfide bridges follow: cysteine 364–cysteine 480, cysteine 368–cysteine 550, and cysteine 443–cysteine 465. Residue histidine 389 is part of the active site. N-linked (GlcNAc...) asparagine glycans are attached at residues asparagine 476 and asparagine 517. A helical transmembrane segment spans residues 593-613 (LTLLFVVYVASSTIGNFGPVV).

The protein belongs to the copper type II ascorbate-dependent monooxygenase family. The cofactor is Cu(2+).

The protein localises to the endoplasmic reticulum membrane. This Gallus gallus (Chicken) protein is DBH-like monooxygenase protein 1 (MOXD1).